A 100-amino-acid chain; its full sequence is Urease subunit gamma (100 aa).

This sequence belongs to the urease gamma subunit family. As to quaternary structure, heterotrimer of UreA (gamma), UreB (beta) and UreC (alpha) subunits. Three heterotrimers associate to form the active enzyme.

The protein resides in the cytoplasm. It carries out the reaction urea + 2 H2O + H(+) = hydrogencarbonate + 2 NH4(+). The protein operates within nitrogen metabolism; urea degradation; CO(2) and NH(3) from urea (urease route): step 1/1. This Burkholderia orbicola (strain MC0-3) protein is Urease subunit gamma.